The following is an 874-amino-acid chain: Coatomer subunit gamma-1 (874 aa).

Positions 1-11 are enriched in basic and acidic residues; sequence MLKKFDKKDEE. Positions 1–21 are disordered; sequence MLKKFDKKDEESGGGSNPFQH. HEAT repeat units follow at residues 64–101, 283–320, 322–355, and 356–392; these read TEAT…IAED, KELA…KHPS, VTAC…GSEG, and SIDR…KYPR. Phosphothreonine is present on Thr-594. Residues 609-874 are interaction with ZNF289/ARFGAP2; sequence RQEIFQEQLA…PVDIVLASVG (266 aa).

The protein belongs to the COPG family. Oligomeric complex that consists of at least the alpha, beta, beta', gamma, delta, epsilon and zeta subunits. Interacts with ZNF289/ARFGAP2 through its C-terminal appendage domain. Interacts with EGFR upon EGF treatment; interaction is essential for regulation of EGF-dependent nuclear transport of EGFR by retrograde trafficking from the Golgi to the ER. The coatomer interacts with KDEL receptors; the interaction is important for retrograde trafficking of KDEL-bearing proteins from the Golgi to the endoplasmic reticulum. Interacts with COPB1. Interacts with TMED10 (via C-terminus). Interacts with TMED2, TMED3, TMED7 and TMED9.

It is found in the cytoplasm. The protein localises to the cytosol. It localises to the golgi apparatus membrane. Its subcellular location is the cytoplasmic vesicle. The protein resides in the COPI-coated vesicle membrane. Functionally, the coatomer is a cytosolic protein complex that binds to dilysine motifs and reversibly associates with Golgi non-clathrin-coated vesicles, which further mediate biosynthetic protein transport from the ER, via the Golgi up to the trans Golgi network. Coatomer complex is required for budding from Golgi membranes, and is essential for the retrograde Golgi-to-ER transport of dilysine-tagged proteins. In mammals, the coatomer can only be recruited by membranes associated to ADP-ribosylation factors (ARFs), which are small GTP-binding proteins; the complex also influences the Golgi structural integrity, as well as the processing, activity, and endocytic recycling of LDL receptors. Required for limiting lipid storage in lipid droplets. Involved in lipid homeostasis by regulating the presence of perilipin family members PLIN2 and PLIN3 at the lipid droplet surface and promoting the association of adipocyte triglyceride lipase (PNPLA2) with the lipid droplet surface to mediate lipolysis. The chain is Coatomer subunit gamma-1 (COPG1) from Bos taurus (Bovine).